Reading from the N-terminus, the 105-residue chain is Ferredoxin (105 aa).

[3Fe-4S] cluster-binding residues include cysteine 8 and cysteine 16. [4Fe-4S] cluster contacts are provided by cysteine 20, cysteine 39, cysteine 42, and cysteine 45. In terms of domain architecture, 4Fe-4S ferredoxin-type spans 30–59 (RSLYIHPDECVDCGACEPVCPVEAIFYEDD). A [3Fe-4S] cluster-binding site is contributed by cysteine 49.

[4Fe-4S] cluster serves as cofactor. [3Fe-4S] cluster is required as a cofactor.

In terms of biological role, ferredoxins are iron-sulfur proteins that transfer electrons in a wide variety of metabolic reactions. Putative electron transport protein for the cytochrome P-450SOY system from the same organism. The chain is Ferredoxin from Streptomyces griseus.